A 379-amino-acid chain; its full sequence is Cytochrome b (379 aa).

Helical transmembrane passes span 33–53 (FGSL…FLAM), 77–98 (WLIR…FIHV), 113–133 (WNIG…GYVL), and 178–198 (FFAF…VHLL). Heme b contacts are provided by H83 and H97. 2 residues coordinate heme b: H182 and H196. H201 is an a ubiquinone binding site. A run of 4 helical transmembrane segments spans residues 226-246 (TKDL…ALFF), 288-308 (LGGV…PLLN), 320-340 (VTQV…WIGG), and 347-367 (FTTI…ILIP).

Belongs to the cytochrome b family. As to quaternary structure, the cytochrome bc1 complex contains 11 subunits: 3 respiratory subunits (MT-CYB, CYC1 and UQCRFS1), 2 core proteins (UQCRC1 and UQCRC2) and 6 low-molecular weight proteins (UQCRH/QCR6, UQCRB/QCR7, UQCRQ/QCR8, UQCR10/QCR9, UQCR11/QCR10 and a cleavage product of UQCRFS1). This cytochrome bc1 complex then forms a dimer. The cofactor is heme b.

It localises to the mitochondrion inner membrane. Its function is as follows. Component of the ubiquinol-cytochrome c reductase complex (complex III or cytochrome b-c1 complex) that is part of the mitochondrial respiratory chain. The b-c1 complex mediates electron transfer from ubiquinol to cytochrome c. Contributes to the generation of a proton gradient across the mitochondrial membrane that is then used for ATP synthesis. The polypeptide is Cytochrome b (MT-CYB) (Akodon mystax (Caparao grass mouse)).